Consider the following 586-residue polypeptide: Dihydroxy-acid dehydratase 2 (586 aa).

C68 provides a ligand contact to [2Fe-2S] cluster. Position 100 (D100) interacts with Mg(2+). A [2Fe-2S] cluster-binding site is contributed by C141. D142 and K143 together coordinate Mg(2+). Position 143 is an N6-carboxylysine (K143). Residue C213 coordinates [2Fe-2S] cluster. E463 serves as a coordination point for Mg(2+). S489 acts as the Proton acceptor in catalysis.

This sequence belongs to the IlvD/Edd family. As to quaternary structure, homodimer. [2Fe-2S] cluster is required as a cofactor. The cofactor is Mg(2+).

It carries out the reaction (2R)-2,3-dihydroxy-3-methylbutanoate = 3-methyl-2-oxobutanoate + H2O. It catalyses the reaction (2R,3R)-2,3-dihydroxy-3-methylpentanoate = (S)-3-methyl-2-oxopentanoate + H2O. It functions in the pathway amino-acid biosynthesis; L-isoleucine biosynthesis; L-isoleucine from 2-oxobutanoate: step 3/4. Its pathway is amino-acid biosynthesis; L-valine biosynthesis; L-valine from pyruvate: step 3/4. Its function is as follows. Functions in the biosynthesis of branched-chain amino acids. Catalyzes the dehydration of (2R,3R)-2,3-dihydroxy-3-methylpentanoate (2,3-dihydroxy-3-methylvalerate) into 2-oxo-3-methylpentanoate (2-oxo-3-methylvalerate) and of (2R)-2,3-dihydroxy-3-methylbutanoate (2,3-dihydroxyisovalerate) into 2-oxo-3-methylbutanoate (2-oxoisovalerate), the penultimate precursor to L-isoleucine and L-valine, respectively. The chain is Dihydroxy-acid dehydratase 2 from Mesorhizobium japonicum (strain LMG 29417 / CECT 9101 / MAFF 303099) (Mesorhizobium loti (strain MAFF 303099)).